The primary structure comprises 473 residues: Phosphatidylserine synthase 2 (473 aa).

A disordered region spans residues 1–25; the sequence is MRRGERRVAGGSGSESPLLKGRRST. Over 1 to 40 the chain is Cytoplasmic; sequence MRRGERRVAGGSGSESPLLKGRRSTESEVYDDGTNTFFWR. Phosphoserine occurs at positions 12, 14, and 16. Residues 41–61 traverse the membrane as a helical segment; that stretch reads AHTLTVLFILTCALGYVTLLE. The Lumenal portion of the chain corresponds to 62–74; sequence ETPQDTAYNTKRG. Residues 75-95 form a helical membrane-spanning segment; it reads IVASILVFLCFGVTQAKDGPF. The Cytoplasmic portion of the chain corresponds to 96 to 104; it reads SRPHPAYWR. The helical transmembrane segment at 105–125 threads the bilayer; the sequence is FWLCVSVVYELFLIFILFQTV. Residues 126 to 291 are Lumenal-facing; sequence QDGRQFLKYV…EWKPASSLHR (166 aa). The N-linked (GlcNAc...) asparagine glycan is linked to Asn159. Residues 292-312 traverse the membrane as a helical segment; it reads WLAVCGIILVFLLAELNTFYL. Lys313 is a topological domain (cytoplasmic). Residues 314–334 traverse the membrane as a helical segment; that stretch reads FVLWMPPEHYLVLLRLVFFVN. The Lumenal portion of the chain corresponds to 335–354; sequence VGGVAMREIYDFMDELKPHR. Residues 355-375 traverse the membrane as a helical segment; the sequence is KLGQQAWLVAAITVTELLIVV. Topologically, residues 376 to 381 are cytoplasmic; it reads KYDPHT. A helical membrane pass occupies residues 382–402; it reads LTLSLPFYISQCWTLGSILVL. Residues 403 to 473 lie on the Lumenal side of the membrane; the sequence is TWTVWRFFLR…TAEEGTSAAS (71 aa). The disordered stretch occupies residues 422–473; that stretch reads RRQKQQSHQARAVNNRDGHPGPDDDLLGTGTAEEEGTTNDGVTAEEGTSAAS.

Belongs to the phosphatidyl serine synthase family. As to expression, highly expressed in testis. Detected at lower levels in kidney and heart.

It is found in the endoplasmic reticulum membrane. The protein resides in the membrane. It catalyses the reaction a 1,2-diacyl-sn-glycero-3-phosphoethanolamine + L-serine = a 1,2-diacyl-sn-glycero-3-phospho-L-serine + ethanolamine. The enzyme catalyses 1-hexadecanoyl-2-(9Z-octadecenoyl)-sn-glycero-3-phosphoethanolamine + L-serine = 1-hexadecanoyl-2-(9Z-octadecenoyl)-sn-glycero-3-phospho-L-serine + ethanolamine. The catalysed reaction is 1-hexadecanoyl-2-(4Z,7Z,10Z,13Z,16Z,19Z-docosahexaenoyl)-sn-glycero-3-phosphoethanolamine + L-serine = 1-hexadecanoyl-2-(4Z,7Z,10Z,13Z,16Z,19Z-docosahexaenoyl)-sn-glycero-3-phosphoserine + ethanolamine. It carries out the reaction 1-octadecanoyl-2-(5Z,8Z,11Z,14Z)-eicosatetraenoyl-sn-glycero-3-phosphoethanolamine + L-serine = 1-octadecanoyl-2-(5Z,8Z,11Z,14Z)-eicosatetraenoyl-sn-glycero-3-phosphoserine + ethanolamine. It catalyses the reaction 1-octadecanoyl-2-(4Z,7Z,10Z,13Z,16Z,19Z-docosahexaenoyl)-sn-glycero-3-phosphoethanolamine + L-serine = 1-octadecanoyl-2-(4Z,7Z,10Z,13Z,16Z,19Z-docosahexaenoyl)-sn-glycero-3-phosphoserine + ethanolamine. The enzyme catalyses 1-(1Z-octadecenyl)-2-(4Z,7Z,10Z,13Z,16Z,19Z-docosahexaenoyl)-sn-glycero-3-phosphoethanolamine + L-serine = 1-(1Z-octadecenyl)-2-(4Z,7Z,10Z,13Z,16Z,19Z-docosahexaenoyl)-sn-glycero-3-phospho-L-serine + ethanolamine. The catalysed reaction is 1-octadecanoyl-2-(9Z-octadecenoyl)-sn-glycero-3-phosphoethanolamine + L-serine = 1-octadecanoyl-2-(9Z-octadecenoyl)-sn-glycero-3-phospho-L-serine + ethanolamine. It carries out the reaction 1-(1Z-octadecenyl)-2-(9Z-octadecenoyl)-sn-glycero-3-phosphoethanolamine + L-serine = 1-(1Z-octadecenyl)-2-(9Z-octadecenoyl)-sn-glycero-3-phospho-L-serine + ethanolamine. It catalyses the reaction 1-(1Z-octadecenyl)-2-(5Z,8Z,11Z,14Z- eicosatetraenoyl)-sn-glycero-3-phosphoethanolamine + L-serine = 1-(1Z-octadecenyl)-2-(5Z,8Z,11Z,14Z-eicosatetraenoyl)-sn-glycero-3-phospho-L-serine + ethanolamine. It participates in phospholipid metabolism; phosphatidylserine biosynthesis. With respect to regulation, almost complete inhibition by ethanolamine in both the mitochondria-associated membrane (MAM) and endoplasmic reticulum (ER) per se. Its function is as follows. Catalyzes a base-exchange reaction in which the polar head group of phosphatidylethanolamine (PE) or phosphatidylcholine (PC) is replaced by L-serine. Catalyzes the conversion of phosphatatidylethanolamine and does not act on phosphatidylcholine. Can utilize both phosphatidylethanolamine (PE) plasmalogen and diacyl PE as substrate and the latter is six times better utilized, indicating the importance of an ester linkage at the sn-1 position. Although it shows no sn-1 fatty acyl preference, exhibits significant preference towards docosahexaenoic acid (22:6n-3) compared with 18:1 or 20:4 at the sn-2 position. The protein is Phosphatidylserine synthase 2 (Ptdss2) of Mus musculus (Mouse).